The sequence spans 269 residues: Phosphoribosylformylglycinamidine synthase subunit PurQ (269 aa).

In terms of domain architecture, Glutamine amidotransferase type-1 spans V5 to N262. Catalysis depends on C95, which acts as the Nucleophile. Active-site residues include H222, E224, and E232.

In terms of assembly, part of the FGAM synthase complex composed of 1 PurL, 1 PurQ and 2 PurS subunits.

The protein localises to the cytoplasm. The enzyme catalyses N(2)-formyl-N(1)-(5-phospho-beta-D-ribosyl)glycinamide + L-glutamine + ATP + H2O = 2-formamido-N(1)-(5-O-phospho-beta-D-ribosyl)acetamidine + L-glutamate + ADP + phosphate + H(+). It carries out the reaction L-glutamine + H2O = L-glutamate + NH4(+). It participates in purine metabolism; IMP biosynthesis via de novo pathway; 5-amino-1-(5-phospho-D-ribosyl)imidazole from N(2)-formyl-N(1)-(5-phospho-D-ribosyl)glycinamide: step 1/2. Its function is as follows. Part of the phosphoribosylformylglycinamidine synthase complex involved in the purines biosynthetic pathway. Catalyzes the ATP-dependent conversion of formylglycinamide ribonucleotide (FGAR) and glutamine to yield formylglycinamidine ribonucleotide (FGAM) and glutamate. The FGAM synthase complex is composed of three subunits. PurQ produces an ammonia molecule by converting glutamine to glutamate. PurL transfers the ammonia molecule to FGAR to form FGAM in an ATP-dependent manner. PurS interacts with PurQ and PurL and is thought to assist in the transfer of the ammonia molecule from PurQ to PurL. The sequence is that of Phosphoribosylformylglycinamidine synthase subunit PurQ from Methanococcus maripaludis (strain C5 / ATCC BAA-1333).